A 360-amino-acid chain; its full sequence is DNA replication and repair protein RecF (360 aa).

Position 30-37 (glycine 30–threonine 37) interacts with ATP.

Belongs to the RecF family.

It localises to the cytoplasm. In terms of biological role, the RecF protein is involved in DNA metabolism; it is required for DNA replication and normal SOS inducibility. RecF binds preferentially to single-stranded, linear DNA. It also seems to bind ATP. The polypeptide is DNA replication and repair protein RecF (Actinobacillus pleuropneumoniae serotype 7 (strain AP76)).